We begin with the raw amino-acid sequence, 342 residues long: Phosphate acyltransferase (342 aa).

The protein belongs to the PlsX family. In terms of assembly, homodimer. Probably interacts with PlsY.

The protein localises to the cytoplasm. It carries out the reaction a fatty acyl-[ACP] + phosphate = an acyl phosphate + holo-[ACP]. It participates in lipid metabolism; phospholipid metabolism. Its function is as follows. Catalyzes the reversible formation of acyl-phosphate (acyl-PO(4)) from acyl-[acyl-carrier-protein] (acyl-ACP). This enzyme utilizes acyl-ACP as fatty acyl donor, but not acyl-CoA. The protein is Phosphate acyltransferase of Trichormus variabilis (strain ATCC 29413 / PCC 7937) (Anabaena variabilis).